A 237-amino-acid polypeptide reads, in one-letter code: Class B acid phosphatase (237 aa).

Residues Met-1–Ala-23 form the signal peptide. The Nucleophile role is filled by Asp-69. Residues Asp-69 and Asp-71 each coordinate Mg(2+). Catalysis depends on Asp-71, which acts as the Proton donor. Residues Thr-137 to Gly-138 and Lys-177 contribute to the substrate site. Position 192 (Asp-192) interacts with Mg(2+).

The protein belongs to the class B bacterial acid phosphatase family. Homotetramer. It depends on Mg(2+) as a cofactor.

Its subcellular location is the periplasm. The enzyme catalyses a phosphate monoester + H2O = an alcohol + phosphate. Its function is as follows. Dephosphorylates several organic phosphate monoesters. Also has a phosphotransferase activity catalyzing the transfer of low-energy phosphate groups from organic phosphate monoesters to free hydroxyl groups of various organic compounds. The protein is Class B acid phosphatase of Xenorhabdus bovienii (strain SS-2004) (Xenorhabdus nematophila subsp. bovienii).